The sequence spans 501 residues: ATP synthase subunit alpha (501 aa).

169–176 lines the ATP pocket; that stretch reads GDRQTGKT.

The protein belongs to the ATPase alpha/beta chains family. As to quaternary structure, F-type ATPases have 2 components, CF(1) - the catalytic core - and CF(0) - the membrane proton channel. CF(1) has five subunits: alpha(3), beta(3), gamma(1), delta(1), epsilon(1). CF(0) has three main subunits: a(1), b(2) and c(9-12). The alpha and beta chains form an alternating ring which encloses part of the gamma chain. CF(1) is attached to CF(0) by a central stalk formed by the gamma and epsilon chains, while a peripheral stalk is formed by the delta and b chains.

The protein localises to the cell membrane. The enzyme catalyses ATP + H2O + 4 H(+)(in) = ADP + phosphate + 5 H(+)(out). Its function is as follows. Produces ATP from ADP in the presence of a proton gradient across the membrane. The alpha chain is a regulatory subunit. In Streptococcus agalactiae serotype III (strain NEM316), this protein is ATP synthase subunit alpha.